We begin with the raw amino-acid sequence, 607 residues long: NAD-dependent malic enzyme 2, mitochondrial (607 aa).

The N-terminal 32 residues, 1–32 (MMWKNIAGLSKAAAAARTHGSRRCFSTAIPGP), are a transit peptide targeting the mitochondrion. Tyr-136 (proton donor) is an active-site residue. NAD(+) is bound at residue Arg-189. Catalysis depends on Lys-207, which acts as the Proton acceptor. Glu-278, Asp-279, and Asp-302 together coordinate a divalent metal cation. Asp-302 and Asn-449 together coordinate NAD(+).

It belongs to the malic enzymes family. As to quaternary structure, homodimer. Heterodimer of two related subunits in NAD-MEH complex. Interacts with NAD-ME1. Mg(2+) is required as a cofactor. It depends on Mn(2+) as a cofactor. In terms of tissue distribution, expressed in leaves, stems, flowers, and roots (at protein level). Present in pollen.

It localises to the mitochondrion. The catalysed reaction is (S)-malate + NAD(+) = pyruvate + CO2 + NADH. With respect to regulation, activated by 2-ketoglutarate, phosphoenolpyruvate (PEP), fructose 1,6-biphosphate (FBP) and coenzyme A (acetyl-CoA and CoA) as homodimer and by oxaloacetate (OAA), 2-ketoglutarate, succinate, fumarate and CoA as heterodimer NAD-MEH. Repressed by succinate and fumarate as homodimer, in the presence of NAD(+) and competitively toward the substrate L-malate. Functionally, involved in the regulation of sugars and amino acids metabolisms during the night period. In Arabidopsis thaliana (Mouse-ear cress), this protein is NAD-dependent malic enzyme 2, mitochondrial (NAD-ME2).